A 248-amino-acid polypeptide reads, in one-letter code: 14-3-3 protein sigma (248 aa).

A phosphoserine mark is found at Ser5, Ser74, and Ser248.

This sequence belongs to the 14-3-3 family. Homodimer. Interacts with KRT17 and SAMSN1. Found in a complex with XPO7, EIF4A1, ARHGAP1, VPS26A, VPS29 and VPS35. Interacts with GAB2. Interacts with SRPK2. Interacts with COPS6. Interacts with COP1; this interaction leads to proteasomal degradation. Interacts with the 'Thr-369' phosphorylated form of DAPK2. Interacts with PI4KB. Interacts with SLITRK1. Interacts with LRRK2; this interaction is dependent on LRRK2 phosphorylation. Interacts with PKP3 (via N-terminus); the interaction maintains the cytoplasmic pool of PKP3, facilitates PKP3 exchange at desmosomes and restricts PKP3 localization to existing desmosome cell junctions. Interacts with LCP2. In terms of processing, ubiquitinated. Ubiquitination by RFFL induces proteasomal degradation and indirectly regulates p53/TP53 activation.

The protein resides in the cytoplasm. The protein localises to the nucleus. It is found in the secreted. Its function is as follows. Adapter protein implicated in the regulation of a large spectrum of both general and specialized signaling pathways. Binds to a large number of partners, usually by recognition of a phosphoserine or phosphothreonine motif. Binding generally results in the modulation of the activity of the binding partner. Promotes cytosolic retention of GBP1 GTPase by binding to phosphorylated GBP1, thereby inhibiting the innate immune response. Also acts as a TP53/p53-regulated inhibitor of G2/M progression. When bound to KRT17, regulates protein synthesis and epithelial cell growth by stimulating Akt/mTOR pathway. Acts to maintain desmosome cell junction adhesion in epithelial cells via interacting with and sequestering PKP3 to the cytoplasm, thereby restricting its translocation to existing desmosome structures and therefore maintaining desmosome protein homeostasis. Also acts to facilitate PKP3 exchange at desmosome plaques, thereby maintaining keratinocyte intercellular adhesion. May also regulate MDM2 autoubiquitination and degradation and thereby activate p53/TP53. The polypeptide is 14-3-3 protein sigma (SFN) (Bos taurus (Bovine)).